We begin with the raw amino-acid sequence, 80 residues long: UPF0125 protein PD_1376 (80 aa).

It belongs to the UPF0125 (RnfH) family.

The polypeptide is UPF0125 protein PD_1376 (Xylella fastidiosa (strain Temecula1 / ATCC 700964)).